A 185-amino-acid polypeptide reads, in one-letter code: Ribosome-recycling factor (185 aa).

This sequence belongs to the RRF family.

The protein resides in the cytoplasm. Functionally, responsible for the release of ribosomes from messenger RNA at the termination of protein biosynthesis. May increase the efficiency of translation by recycling ribosomes from one round of translation to another. This Thermobifida fusca (strain YX) protein is Ribosome-recycling factor.